The primary structure comprises 386 residues: Patatin group M-3 (386 aa).

Residues 1-23 (MATTKSFLILFFMILATTSSTCA) form the signal peptide. The 198-residue stretch at 32 to 229 (LSIDGGGIKG…TVGDPALLSL (198 aa)) folds into the PNPLA domain. A GXGXXG motif is present at residues 36–41 (GGGIKG). The short motif at 75 to 79 (GTSTG) is the GXSXG element. Ser77 (nucleophile) is an active-site residue. Asn115 carries N-linked (GlcNAc...) asparagine glycosylation. Catalysis depends on Asp215, which acts as the Proton acceptor. The short motif at 215-217 (DGG) is the DGA/G element. Positions 321–384 (ENALTGTTTE…DRKKLRANKA (64 aa)) form a coiled coil.

It belongs to the patatin family. Tuber.

The protein resides in the vacuole. Its function is as follows. Probable lipolytic acyl hydrolase (LAH), an activity which is thought to be involved in the response of tubers to pathogens. The polypeptide is Patatin group M-3 (Solanum tuberosum (Potato)).